The chain runs to 90 residues: MSAVPFTRVLLISGFLAHLLLSTFVTLTVCKEVTEESDDLSKRNVLQRQLWAVGSLMGKKSLENTNRRSDEDMEISALFRGSPLKVKRSD.

The first 30 residues, 1 to 30 (MSAVPFTRVLLISGFLAHLLLSTFVTLTVC), serve as a signal peptide directing secretion. The propeptide occupies 31 to 48 (KEVTEESDDLSKRNVLQR). Gln-49 is subject to Pyrrolidone carboxylic acid. Met-57 is subject to Methionine amide. Residues 61–90 (SLENTNRRSDEDMEISALFRGSPLKVKRSD) constitute a propeptide that is removed on maturation.

Belongs to the bombesin/neuromedin-B/ranatensin family. Expressed by the skin glands.

It localises to the secreted. The chain is [Leu8]-phyllolitorin from Phyllomedusa sauvagei (Sauvage's leaf frog).